Reading from the N-terminus, the 289-residue chain is MYG1 protein CT_386 (289 aa).

This sequence belongs to the MYG1 family.

The protein is MYG1 protein CT_386 of Chlamydia trachomatis serovar D (strain ATCC VR-885 / DSM 19411 / UW-3/Cx).